Here is a 377-residue protein sequence, read N- to C-terminus: MLFHGIPGEHIQGIMEEMERRSKSESRLAKTVQMNGRETSMPSVSPEKPALCAGCGSKISDRYYLLAVDKQWHLRCLKCCECKLALESELTCFAKDGSIYCKEDYYRRFSVQRCARCHLGISASEMVMRARDSVYHLSCFTCTSCNKTLTTGDHFGMRENLVYCRAHFESLVQGEYHAPLNYAELAAKGGGLALPYFNGASAVQKGRPRKRKSPAMGIDINTYNSGCNENDADHLDRDQQPYPPSQKTKXMRTSFKHHQLRTMKSYFAINHNPDAKDLKQLAQKTGLTKRVLQVWFQNARAKFRRNVLRQENGGVDKADGTSLPPPSSDSGALTPPSTATTLTDLTNPSITVVTSVTSSLDSHDSGSPPQTTLTNLF.

LIM zinc-binding domains lie at 50–111 and 112–174; these read ALCA…RFSV and QRCA…LVQG. 3 disordered regions span residues 228–249, 309–346, and 358–377; these read NENDADHLDRDQQPYPPSQKTK, RQENGGVDKADGTSLPPPSSDSGALTPPSTATTLTDLT, and SSLDSHDSGSPPQTTLTNLF. Residues 248–307 constitute a DNA-binding region (homeobox); it reads TKXMRTSFKHHQLRTMKSYFAINHNPDAKDLKQLAQKTGLTKRVLQVWFQNARAKFRRNV. Residues 333-346 are compositionally biased toward low complexity; it reads LTPPSTATTLTDLT. A compositionally biased stretch (polar residues) spans 365–377; sequence SGSPPQTTLTNLF.

It localises to the nucleus. May be involved in gonadal development. This is LIM/homeobox protein Lhx9 (lhx9) from Psalidodon fasciatus (Banded astyanax).